The primary structure comprises 172 residues: Shikimate kinase (172 aa).

Ala11–Glu16 serves as a coordination point for ATP. Thr15 contacts Mg(2+). 3 residues coordinate substrate: Asp33, Arg57, and Gly80. Arg120 serves as a coordination point for ATP. Residue Arg142 participates in substrate binding.

It belongs to the shikimate kinase family. In terms of assembly, monomer. Mg(2+) serves as cofactor.

Its subcellular location is the cytoplasm. It carries out the reaction shikimate + ATP = 3-phosphoshikimate + ADP + H(+). It functions in the pathway metabolic intermediate biosynthesis; chorismate biosynthesis; chorismate from D-erythrose 4-phosphate and phosphoenolpyruvate: step 5/7. In terms of biological role, catalyzes the specific phosphorylation of the 3-hydroxyl group of shikimic acid using ATP as a cosubstrate. This Flavobacterium psychrophilum (strain ATCC 49511 / DSM 21280 / CIP 103535 / JIP02/86) protein is Shikimate kinase.